The following is a 210-amino-acid chain: Probable GTP-binding protein EngB (210 aa).

The 175-residue stretch at 25 to 199 (TGIEVAFAGR…RQKLDTWFSE (175 aa)) folds into the EngB-type G domain. GTP is bound by residues 33-40 (GRSNAGKS), 60-64 (GRTQL), 78-81 (DLPG), 145-148 (TKTD), and 178-180 (FSS). Mg(2+)-binding residues include Ser-40 and Thr-62.

The protein belongs to the TRAFAC class TrmE-Era-EngA-EngB-Septin-like GTPase superfamily. EngB GTPase family. Requires Mg(2+) as cofactor.

Its function is as follows. Necessary for normal cell division and for the maintenance of normal septation. The protein is Probable GTP-binding protein EngB of Escherichia coli O6:K15:H31 (strain 536 / UPEC).